A 341-amino-acid chain; its full sequence is AB hydrolase superfamily protein C1039.03 (341 aa).

Belongs to the AB hydrolase superfamily.

The protein resides in the cytoplasm. It localises to the nucleus. In Schizosaccharomyces pombe (strain 972 / ATCC 24843) (Fission yeast), this protein is AB hydrolase superfamily protein C1039.03.